Here is a 173-residue protein sequence, read N- to C-terminus: Translation initiation factor IF-3 (173 aa).

The protein belongs to the IF-3 family. Monomer.

It localises to the cytoplasm. Its function is as follows. IF-3 binds to the 30S ribosomal subunit and shifts the equilibrium between 70S ribosomes and their 50S and 30S subunits in favor of the free subunits, thus enhancing the availability of 30S subunits on which protein synthesis initiation begins. The protein is Translation initiation factor IF-3 of Ehrlichia chaffeensis (strain ATCC CRL-10679 / Arkansas).